The following is a 255-amino-acid chain: 3-deoxy-manno-octulosonate cytidylyltransferase (255 aa).

Belongs to the KdsB family.

The protein resides in the cytoplasm. It catalyses the reaction 3-deoxy-alpha-D-manno-oct-2-ulosonate + CTP = CMP-3-deoxy-beta-D-manno-octulosonate + diphosphate. It participates in nucleotide-sugar biosynthesis; CMP-3-deoxy-D-manno-octulosonate biosynthesis; CMP-3-deoxy-D-manno-octulosonate from 3-deoxy-D-manno-octulosonate and CTP: step 1/1. The protein operates within bacterial outer membrane biogenesis; lipopolysaccharide biosynthesis. Activates KDO (a required 8-carbon sugar) for incorporation into bacterial lipopolysaccharide in Gram-negative bacteria. In Xanthobacter autotrophicus (strain ATCC BAA-1158 / Py2), this protein is 3-deoxy-manno-octulosonate cytidylyltransferase.